Reading from the N-terminus, the 524-residue chain is GMP synthase [glutamine-hydrolyzing] (524 aa).

Residues 5–195 (KVIVIDFGGQ…VRGVCGCAGT (191 aa)) enclose the Glutamine amidotransferase type-1 domain. The active-site Nucleophile is the Cys82. Catalysis depends on residues His169 and Glu171. Positions 196 to 389 (WKMDSFVKNT…LGLPDYLVFR (194 aa)) constitute a GMPS ATP-PPase domain. 223–229 (SGGVDSS) is an ATP binding site.

As to quaternary structure, homodimer.

It carries out the reaction XMP + L-glutamine + ATP + H2O = GMP + L-glutamate + AMP + diphosphate + 2 H(+). It participates in purine metabolism; GMP biosynthesis; GMP from XMP (L-Gln route): step 1/1. In terms of biological role, catalyzes the synthesis of GMP from XMP. The chain is GMP synthase [glutamine-hydrolyzing] from Agathobacter rectalis (strain ATCC 33656 / DSM 3377 / JCM 17463 / KCTC 5835 / VPI 0990) (Eubacterium rectale).